A 320-amino-acid polypeptide reads, in one-letter code: Ferrochelatase (320 aa).

Residues His-194 and Glu-275 each coordinate Fe cation.

Belongs to the ferrochelatase family.

The protein localises to the cytoplasm. The catalysed reaction is heme b + 2 H(+) = protoporphyrin IX + Fe(2+). The protein operates within porphyrin-containing compound metabolism; protoheme biosynthesis; protoheme from protoporphyrin-IX: step 1/1. In terms of biological role, catalyzes the ferrous insertion into protoporphyrin IX. This Enterobacter sp. (strain 638) protein is Ferrochelatase.